A 359-amino-acid polypeptide reads, in one-letter code: UDP-N-acetylglucosamine--N-acetylmuramyl-(pentapeptide) pyrophosphoryl-undecaprenol N-acetylglucosamine transferase (359 aa).

Residues 14–16 (TGG), Asn126, Arg166, Ser194, Ile248, and Gln293 contribute to the UDP-N-acetyl-alpha-D-glucosamine site.

This sequence belongs to the glycosyltransferase 28 family. MurG subfamily.

It localises to the cell inner membrane. It catalyses the reaction di-trans,octa-cis-undecaprenyl diphospho-N-acetyl-alpha-D-muramoyl-L-alanyl-D-glutamyl-meso-2,6-diaminopimeloyl-D-alanyl-D-alanine + UDP-N-acetyl-alpha-D-glucosamine = di-trans,octa-cis-undecaprenyl diphospho-[N-acetyl-alpha-D-glucosaminyl-(1-&gt;4)]-N-acetyl-alpha-D-muramoyl-L-alanyl-D-glutamyl-meso-2,6-diaminopimeloyl-D-alanyl-D-alanine + UDP + H(+). Its pathway is cell wall biogenesis; peptidoglycan biosynthesis. Functionally, cell wall formation. Catalyzes the transfer of a GlcNAc subunit on undecaprenyl-pyrophosphoryl-MurNAc-pentapeptide (lipid intermediate I) to form undecaprenyl-pyrophosphoryl-MurNAc-(pentapeptide)GlcNAc (lipid intermediate II). This is UDP-N-acetylglucosamine--N-acetylmuramyl-(pentapeptide) pyrophosphoryl-undecaprenol N-acetylglucosamine transferase from Verminephrobacter eiseniae (strain EF01-2).